The following is an 89-amino-acid chain: Small ribosomal subunit protein uS15 (89 aa).

The segment covering 1–18 (MSLDTAEKQKLIENHQVH) has biased composition (basic and acidic residues). The tract at residues 1–23 (MSLDTAEKQKLIENHQVHPTDTG) is disordered.

The protein belongs to the universal ribosomal protein uS15 family. In terms of assembly, part of the 30S ribosomal subunit. Forms a bridge to the 50S subunit in the 70S ribosome, contacting the 23S rRNA.

Functionally, one of the primary rRNA binding proteins, it binds directly to 16S rRNA where it helps nucleate assembly of the platform of the 30S subunit by binding and bridging several RNA helices of the 16S rRNA. Its function is as follows. Forms an intersubunit bridge (bridge B4) with the 23S rRNA of the 50S subunit in the ribosome. The polypeptide is Small ribosomal subunit protein uS15 (Prochlorococcus marinus (strain AS9601)).